A 243-amino-acid chain; its full sequence is Pyridoxine 5'-phosphate synthase (243 aa).

N9 is a 3-amino-2-oxopropyl phosphate binding site. 11–12 (DH) contributes to the 1-deoxy-D-xylulose 5-phosphate binding site. R20 is a binding site for 3-amino-2-oxopropyl phosphate. Catalysis depends on H45, which acts as the Proton acceptor. 2 residues coordinate 1-deoxy-D-xylulose 5-phosphate: R47 and H52. The active-site Proton acceptor is E72. 1-deoxy-D-xylulose 5-phosphate is bound at residue T102. H193 (proton donor) is an active-site residue. 3-amino-2-oxopropyl phosphate is bound by residues G194 and 215 to 216 (GH).

It belongs to the PNP synthase family. In terms of assembly, homooctamer; tetramer of dimers.

It localises to the cytoplasm. The enzyme catalyses 3-amino-2-oxopropyl phosphate + 1-deoxy-D-xylulose 5-phosphate = pyridoxine 5'-phosphate + phosphate + 2 H2O + H(+). The protein operates within cofactor biosynthesis; pyridoxine 5'-phosphate biosynthesis; pyridoxine 5'-phosphate from D-erythrose 4-phosphate: step 5/5. Functionally, catalyzes the complicated ring closure reaction between the two acyclic compounds 1-deoxy-D-xylulose-5-phosphate (DXP) and 3-amino-2-oxopropyl phosphate (1-amino-acetone-3-phosphate or AAP) to form pyridoxine 5'-phosphate (PNP) and inorganic phosphate. This Yersinia pseudotuberculosis serotype I (strain IP32953) protein is Pyridoxine 5'-phosphate synthase.